Consider the following 253-residue polypeptide: Homeobox protein EMX2 (253 aa).

The segment at residues Pro-155–Lys-214 is a DNA-binding region (homeobox). Residues Gln-213–Asp-253 are disordered. Basic residues predominate over residues Lys-225 to Arg-234.

Belongs to the EMX homeobox family. Interacts with translation initiation factor EIF4E.

It is found in the nucleus. It localises to the cell projection. The protein localises to the axon. Its function is as follows. Transcription factor, which in cooperation with EMX1, acts to generate the boundary between the roof and archipallium in the developing brain. May function in combination with OTX1/2 to specify cell fates in the developing central nervous system. In the inner ear, it controls the distribution of GPR156 at hair cell boundaries, and regulates the organization of stereociliary bundles in opposite orientations across the line of polarity reversal (LPR). The polypeptide is Homeobox protein EMX2 (EMX2) (Bos taurus (Bovine)).